The chain runs to 105 residues: Nucleoid-associated protein cu1912 (105 aa).

This sequence belongs to the YbaB/EbfC family. As to quaternary structure, homodimer.

The protein localises to the cytoplasm. It localises to the nucleoid. Functionally, binds to DNA and alters its conformation. May be involved in regulation of gene expression, nucleoid organization and DNA protection. The protein is Nucleoid-associated protein cu1912 of Corynebacterium urealyticum (strain ATCC 43042 / DSM 7109).